Here is a 480-residue protein sequence, read N- to C-terminus: Ribosomal protein uS12 methylthiotransferase RimO (480 aa).

Residues 14 to 135 (LSVAMVTLGC…IAARLRSIVA (122 aa)) enclose the MTTase N-terminal domain. 6 residues coordinate [4Fe-4S] cluster: Cys23, Cys59, Cys98, Cys193, Cys197, and Cys200. In terms of domain architecture, Radical SAM core spans 179 to 410 (LDDGPTAALK…DLVEELTSQR (232 aa)). The region spanning 412-480 (AERLGEQVEV…EGADLDARPL (69 aa)) is the TRAM domain.

The protein belongs to the methylthiotransferase family. RimO subfamily. Requires [4Fe-4S] cluster as cofactor.

It is found in the cytoplasm. The enzyme catalyses L-aspartate(89)-[ribosomal protein uS12]-hydrogen + (sulfur carrier)-SH + AH2 + 2 S-adenosyl-L-methionine = 3-methylsulfanyl-L-aspartate(89)-[ribosomal protein uS12]-hydrogen + (sulfur carrier)-H + 5'-deoxyadenosine + L-methionine + A + S-adenosyl-L-homocysteine + 2 H(+). In terms of biological role, catalyzes the methylthiolation of an aspartic acid residue of ribosomal protein uS12. The chain is Ribosomal protein uS12 methylthiotransferase RimO from Nocardioides sp. (strain ATCC BAA-499 / JS614).